Consider the following 339-residue polypeptide: Dihydroorotate dehydrogenase (quinone) (339 aa).

Residues 62–66 (AGLDK) and Thr-86 each bind FMN. Position 66 (Lys-66) interacts with substrate. Position 111 to 115 (111 to 115 (NRMGF)) interacts with substrate. FMN contacts are provided by Asn-139 and Asn-172. Position 172 (Asn-172) interacts with substrate. Ser-175 acts as the Nucleophile in catalysis. Asn-177 lines the substrate pocket. The FMN site is built by Lys-217 and Thr-245. 246-247 (NT) contributes to the substrate binding site. FMN-binding positions include Gly-268, Gly-297, and 318–319 (YS).

It belongs to the dihydroorotate dehydrogenase family. Type 2 subfamily. Monomer. It depends on FMN as a cofactor.

Its subcellular location is the cell membrane. The enzyme catalyses (S)-dihydroorotate + a quinone = orotate + a quinol. It functions in the pathway pyrimidine metabolism; UMP biosynthesis via de novo pathway; orotate from (S)-dihydroorotate (quinone route): step 1/1. In terms of biological role, catalyzes the conversion of dihydroorotate to orotate with quinone as electron acceptor. The sequence is that of Dihydroorotate dehydrogenase (quinone) from Shewanella frigidimarina (strain NCIMB 400).